Consider the following 255-residue polypeptide: tRNA (guanine-N(7)-)-methyltransferase (255 aa).

The tract at residues methionine 1 to valine 35 is disordered. Residues leucine 13–alanine 23 show a composition bias toward basic residues. S-adenosyl-L-methionine contacts are provided by residues glycine 75, glutamate 98–leucine 99, asparagine 131–serine 132, and leucine 151. Aspartate 154 is an active-site residue. Residue threonine 229–glutamate 231 coordinates S-adenosyl-L-methionine.

This sequence belongs to the class I-like SAM-binding methyltransferase superfamily. TrmB family.

It is found in the nucleus. The catalysed reaction is guanosine(46) in tRNA + S-adenosyl-L-methionine = N(7)-methylguanosine(46) in tRNA + S-adenosyl-L-homocysteine. The protein operates within tRNA modification; N(7)-methylguanine-tRNA biosynthesis. In terms of biological role, catalyzes the formation of N(7)-methylguanine at position 46 (m7G46) in tRNA. The sequence is that of tRNA (guanine-N(7)-)-methyltransferase from Zea mays (Maize).